The chain runs to 302 residues: Aspartate carbamoyltransferase catalytic subunit (302 aa).

Residues arginine 55 and threonine 56 each coordinate carbamoyl phosphate. Lysine 83 is a binding site for L-aspartate. The carbamoyl phosphate site is built by arginine 105, histidine 133, and glutamine 136. Arginine 166 and arginine 222 together coordinate L-aspartate. Glycine 262 and proline 263 together coordinate carbamoyl phosphate.

It belongs to the aspartate/ornithine carbamoyltransferase superfamily. ATCase family. In terms of assembly, heterododecamer (2C3:3R2) of six catalytic PyrB chains organized as two trimers (C3), and six regulatory PyrI chains organized as three dimers (R2).

The catalysed reaction is carbamoyl phosphate + L-aspartate = N-carbamoyl-L-aspartate + phosphate + H(+). It functions in the pathway pyrimidine metabolism; UMP biosynthesis via de novo pathway; (S)-dihydroorotate from bicarbonate: step 2/3. Catalyzes the condensation of carbamoyl phosphate and aspartate to form carbamoyl aspartate and inorganic phosphate, the committed step in the de novo pyrimidine nucleotide biosynthesis pathway. The sequence is that of Aspartate carbamoyltransferase catalytic subunit from Solibacter usitatus (strain Ellin6076).